A 154-amino-acid polypeptide reads, in one-letter code: Dau c 1 isoallergen Dau c 1.0301 (154 aa).

Belongs to the BetVI family. Expressed in roots.

In Daucus carota (Wild carrot), this protein is Dau c 1 isoallergen Dau c 1.0301.